The following is a 188-amino-acid chain: GMP synthase [glutamine-hydrolyzing] subunit A (188 aa).

Positions 2-188 constitute a Glutamine amidotransferase type-1 domain; it reads KIAVIYFGGQ…FKNFIEACKK (187 aa). The active-site Nucleophile is Cys79. Catalysis depends on residues His166 and Glu168.

Heterodimer composed of a glutamine amidotransferase subunit (A) and a GMP-binding subunit (B).

It catalyses the reaction XMP + L-glutamine + ATP + H2O = GMP + L-glutamate + AMP + diphosphate + 2 H(+). Its pathway is purine metabolism; GMP biosynthesis; GMP from XMP (L-Gln route): step 1/1. In terms of biological role, catalyzes the synthesis of GMP from XMP. This chain is GMP synthase [glutamine-hydrolyzing] subunit A, found in Sulfurisphaera tokodaii (strain DSM 16993 / JCM 10545 / NBRC 100140 / 7) (Sulfolobus tokodaii).